Here is a 139-residue protein sequence, read N- to C-terminus: Large ribosomal subunit protein uL16 (139 aa).

Residues 1–17 (MLMPKRVKYRKTQRGRM) are compositionally biased toward basic residues. The tract at residues 1–24 (MLMPKRVKYRKTQRGRMKGNSGRG) is disordered.

This sequence belongs to the universal ribosomal protein uL16 family. In terms of assembly, part of the 50S ribosomal subunit.

Functionally, binds 23S rRNA and is also seen to make contacts with the A and possibly P site tRNAs. The polypeptide is Large ribosomal subunit protein uL16 (Pelodictyon phaeoclathratiforme (strain DSM 5477 / BU-1)).